Here is a 161-residue protein sequence, read N- to C-terminus: MTRTRKEELVAEMTAEFKDAGAIIVCDYKGMTVENLETVRNLAKDEDTKVKVVKNRLAMIALQNAGCEAVDFKDTNLVIWGDTQVLPCKIADKAATQFKDHFTIKTGLIQGEVASMETINAMAKLPTRDELIGMLLNVWNAPVQNFTIGLQALADKKESEA.

Belongs to the universal ribosomal protein uL10 family. As to quaternary structure, part of the ribosomal stalk of the 50S ribosomal subunit. The N-terminus interacts with L11 and the large rRNA to form the base of the stalk. The C-terminus forms an elongated spine to which L12 dimers bind in a sequential fashion forming a multimeric L10(L12)X complex.

Forms part of the ribosomal stalk, playing a central role in the interaction of the ribosome with GTP-bound translation factors. The sequence is that of Large ribosomal subunit protein uL10 from Sulfurovum sp. (strain NBC37-1).